Consider the following 508-residue polypeptide: Photosystem II CP47 reaction center protein (508 aa).

A run of 6 helical transmembrane segments spans residues serine 21–serine 36, isoleucine 101–tryptophan 115, glycine 140–phenylalanine 156, isoleucine 203–serine 218, valine 237–valine 252, and serine 457–arginine 472.

The protein belongs to the PsbB/PsbC family. PsbB subfamily. PSII is composed of 1 copy each of membrane proteins PsbA, PsbB, PsbC, PsbD, PsbE, PsbF, PsbH, PsbI, PsbJ, PsbK, PsbL, PsbM, PsbT, PsbX, PsbY, PsbZ, Psb30/Ycf12, at least 3 peripheral proteins of the oxygen-evolving complex and a large number of cofactors. It forms dimeric complexes. It depends on Binds multiple chlorophylls. PSII binds additional chlorophylls, carotenoids and specific lipids. as a cofactor.

It is found in the plastid. The protein resides in the chloroplast thylakoid membrane. Its function is as follows. One of the components of the core complex of photosystem II (PSII). It binds chlorophyll and helps catalyze the primary light-induced photochemical processes of PSII. PSII is a light-driven water:plastoquinone oxidoreductase, using light energy to abstract electrons from H(2)O, generating O(2) and a proton gradient subsequently used for ATP formation. This chain is Photosystem II CP47 reaction center protein, found in Atropa belladonna (Belladonna).